Reading from the N-terminus, the 322-residue chain is MKIIFLGTGAAIPTKHRNHSSVGIKYDGEVFLFDCGEGTQRQMIYTDISPMKINNIFISHLHGDHILGLAGLLQSIGFNGRTEPINIYGPPEIKNTIENILKIGYHSINFKITVHEINSKKPMKIIDSEKYMAYAYPVNHSIPCYAYILKEKKKPQLNLKKAMELGVEVGPDLKSLKDGNEVKLKNGKIIYPNDVLLPPKDSMCVAYSGDTMPIEDFGEFLNSIGCTVLIHEATFGSSKKNNAVETMHSTIEDAVNIGKIACVDTVILTHISARYDDNIEIYYNEIENIIKNNNEYNDNNFKIIVAEDLMEYDLKNKETIKK.

The Zn(2+) site is built by H60, H62, D64, H65, H140, D210, and H270. D64 acts as the Proton acceptor in catalysis.

It belongs to the RNase Z family. In terms of assembly, homodimer. Requires Zn(2+) as cofactor.

The catalysed reaction is Endonucleolytic cleavage of RNA, removing extra 3' nucleotides from tRNA precursor, generating 3' termini of tRNAs. A 3'-hydroxy group is left at the tRNA terminus and a 5'-phosphoryl group is left at the trailer molecule.. In terms of biological role, zinc phosphodiesterase, which displays some tRNA 3'-processing endonuclease activity. Probably involved in tRNA maturation, by removing a 3'-trailer from precursor tRNA. In Methanococcus aeolicus (strain ATCC BAA-1280 / DSM 17508 / OCM 812 / Nankai-3), this protein is Ribonuclease Z.